The sequence spans 840 residues: SLIT and NTRK-like protein 6 (840 aa).

The N-terminal stretch at 1–18 (MKLWTYLLYPSLLACLSL) is a signal peptide. One can recognise an LRRNT 1 domain in the interval 22-67 (SPMPSVRGSCDTLCNCEEKDGIMIINCEEKGINKLSQISVPPSRPF). Residues 23–609 (PMPSVRGSCD…LTDAVPLSVL (587 aa)) lie on the Extracellular side of the membrane. LRR repeat units follow at residues 89 to 110 (NALS…AFNG), 113 to 134 (LLKQ…TFHG), 137 to 158 (NLEF…AFSK), 161 to 182 (RLKV…IFRF), and 184 to 205 (PLTH…GFLE). An LRRCT 1 domain is found at 218-269 (NKWACNCELLQLKNWLENMPPQSIIGDVICYSPPPFKGSVLSRLKKESFCPT). Residues 319 to 360 (PSTQLPVPYCPIPCNCKVLSPSGLLIHCQERNIESLSDLQPP) enclose the LRRNT 2 domain. LRR repeat units follow at residues 363–384 (NPRK…DLTD), 387–408 (TLEM…SFMN), 411–432 (RLQK…MFLG), 435–456 (SLEY…TFNP), 459–480 (KLKV…IFLG), and 482–503 (PLTR…NILD). An LRRCT 2 domain is found at 516–567 (NPWDCSCDLVGLQQWIHKLGKGTMTDDILCTSPGHLDKKELKALNSDLLCPG). Residues 610–630 (ILGLLIVFITIVFCAAGIVVF) traverse the membrane as a helical segment. Topologically, residues 631–840 (VLHRRRRYKK…DYLEVLEQQT (210 aa)) are cytoplasmic. Residues 717-726 (QRSLLERENH) show a composition bias toward basic and acidic residues. Positions 717–736 (QRSLLERENHSPLTGSNMKY) are disordered. Residues 727-736 (SPLTGSNMKY) are compositionally biased toward polar residues.

It belongs to the SLITRK family. As to expression, in the embryo, expressed in otic cyst, lateral trunk epidermis and underlying mesodermal tissue, limb bud, maxillary process, cochlea, retina, tongue, tooth primordium, central nervous system, and primordia of visceral organs including lung, gastrointestinal tract and pancreas. In the central nervous system, expressed primarily in dorsal thalamus, cerebellum and medulla.

The protein localises to the cell membrane. Its function is as follows. Regulator of neurite outgrowth required for normal hearing and vision. This is SLIT and NTRK-like protein 6 (Slitrk6) from Mus musculus (Mouse).